Reading from the N-terminus, the 428-residue chain is Enolase (428 aa).

Q163 serves as a coordination point for (2R)-2-phosphoglycerate. E205 acts as the Proton donor in catalysis. Mg(2+) contacts are provided by D242, E285, and D312. (2R)-2-phosphoglycerate is bound by residues K337, R366, S367, and K388. The active-site Proton acceptor is K337.

Belongs to the enolase family. Mg(2+) serves as cofactor.

The protein localises to the cytoplasm. It is found in the secreted. The protein resides in the cell surface. It carries out the reaction (2R)-2-phosphoglycerate = phosphoenolpyruvate + H2O. It functions in the pathway carbohydrate degradation; glycolysis; pyruvate from D-glyceraldehyde 3-phosphate: step 4/5. In terms of biological role, catalyzes the reversible conversion of 2-phosphoglycerate (2-PG) into phosphoenolpyruvate (PEP). It is essential for the degradation of carbohydrates via glycolysis. The sequence is that of Enolase from Neisseria meningitidis serogroup B (strain ATCC BAA-335 / MC58).